The following is an 819-amino-acid chain: Protein kinase C-binding protein NELL2 (819 aa).

A signal peptide spans 1-24 (MHAMESRVLLRTFCVILGLGAVWG). Residues asparagine 56, asparagine 228, asparagine 296, and asparagine 301 are each glycosylated (N-linked (GlcNAc...) asparagine). The region spanning 67-231 (PRSIKASTAT…AQCPDLNRTC (165 aa)) is the Laminin G-like domain. In terms of domain architecture, VWFC 1 spans 275-334 (RTCTVKGTTYRESESWTDGCKNCTCLNGTIQCETLVCPAPDCPPKSAPAYVDGKCCKECK). The region spanning 400–442 (GYDFCSEKHTCMENSVCRNLNDRAVCSCRDGFRALREDNAYCE) is the EGF-like 1 domain. 3 disulfide bridges follow: cysteine 404/cysteine 416, cysteine 410/cysteine 425, and cysteine 427/cysteine 441. 3 residues coordinate Ca(2+): aspartate 443, isoleucine 444, and glutamate 446. Residues 443 to 484 (DIDECAEGRHYCRENTMCVNTPGSFMCICKTGYIRIDDYSCT) enclose the EGF-like 2; calcium-binding domain. Disulfide bonds link cysteine 447–cysteine 460, cysteine 454–cysteine 469, cysteine 471–cysteine 483, cysteine 489–cysteine 502, cysteine 496–cysteine 511, cysteine 513–cysteine 524, cysteine 528–cysteine 538, cysteine 532–cysteine 544, and cysteine 546–cysteine 555. Asparagine 462, threonine 463, and serine 466 together coordinate Ca(2+). The region spanning 485–525 (EHDECLTNQHNCDENALCFNTVGGHNCVCKPGYTGNGTTCK) is the EGF-like 3; calcium-binding domain. N-linked (GlcNAc...) asparagine glycosylation occurs at asparagine 520. The region spanning 526–556 (AFCKDGCRNGGACIAANVCACPQGFTGPSCE) is the EGF-like 4 domain. Residue threonine 551 is glycosylated (O-linked (GlcNAc...) threonine). 3 residues coordinate Ca(2+): aspartate 558, isoleucine 559, and glutamate 561. Residues 558-604 (DIDECSEGFVQCDSRANCINLPGWYHCECRDGYHDNGMFAPGGESCE) form the EGF-like 5; calcium-binding domain. 3 cysteine pairs are disulfide-bonded: cysteine 562-cysteine 575, cysteine 569-cysteine 584, and cysteine 586-cysteine 603. Residues asparagine 577, leucine 578, and tryptophan 581 each contribute to the Ca(2+) site. Residues aspartate 605, isoleucine 606, and glutamate 608 each coordinate Ca(2+). The EGF-like 6; calcium-binding domain maps to 605–640 (DIDECGTGRHSCTNDTICFNLDGGYDCRCPHGKNCT). 3 disulfide bridges follow: cysteine 609–cysteine 622, cysteine 616–cysteine 631, and cysteine 633–cysteine 639. The N-linked (GlcNAc...) asparagine glycan is linked to asparagine 618. Positions 624, 625, and 628 each coordinate Ca(2+). Residue asparagine 638 is glycosylated (N-linked (GlcNAc...) asparagine). Residues 701–759 (SQCLHQNGETVYNSGDTWVQDCRQCRCLQGEVDCWPLACPEVECEFSVLPENECCPRCV) form the VWFC 2 domain.

Homotrimer. Interacts with NICOL1; this interaction triggers epididymal differentiation. Interacts (via EGF domains) with ROBO3 (via FN domains); binding to ROBO3 induces repulsive guidance cue for commissural axons. In terms of tissue distribution, expressed in brain and testis but not in epididymis. Expressed in regions flanking the commissural axon trajectory, including the ventral horn.

The protein resides in the secreted. In terms of biological role, plays multiple roles in neural tissues, regulates neuronal proliferation, survival, differentiation, polarization, as well as axon guidance and synaptic functions. Plays an important role in axon development during neuronal differentiation through the MAPK intracellular signaling pathway. Via binding to its receptor ROBO3, plays a role in axon guidance, functioning as a repulsive axon guidance cue that contributes to commissural axon guidance to the midline. Required for neuron survival through the modulation of MAPK signaling pathways too. Involved in the regulation of hypothalamic GNRH secretion and the control of puberty. Functionally, epididymal-secreted protein that signals through a ROS1-pathway to regulate the epididymal initial segment (IS) maturation, sperm maturation and male fertility. In Mus musculus (Mouse), this protein is Protein kinase C-binding protein NELL2.